Consider the following 360-residue polypeptide: Endolytic peptidoglycan transglycosylase RlpA (360 aa).

The N-terminal stretch at 1 to 17 (MRKEWLWVGIASVLLSA) is a signal peptide. The N-palmitoyl cysteine moiety is linked to residue Cys-18. A lipid anchor (S-diacylglycerol cysteine) is attached at Cys-18. One can recognise an SPOR domain in the interval 283–359 (SAISGGYVVQ…AQQQSFIVAA (77 aa)).

It belongs to the RlpA family.

It is found in the cell membrane. Its function is as follows. Lytic transglycosylase with a strong preference for naked glycan strands that lack stem peptides. The chain is Endolytic peptidoglycan transglycosylase RlpA from Yersinia pestis.